The following is a 533-amino-acid chain: DNA-directed RNA polymerase III subunit RPC3 (533 aa).

The disordered stretch occupies residues proline 161 to asparagine 183. A Phosphoserine modification is found at serine 194. The disordered stretch occupies residues glycine 197–proline 228. Positions glycine 211–aspartate 222 are enriched in basic and acidic residues.

This sequence belongs to the eukaryotic RPC3/POLR3C RNA polymerase subunit family. In terms of assembly, component of the RNA polymerase III complex consisting of 17 subunits: a ten-subunit horseshoe-shaped catalytic core composed of POLR3A/RPC1, POLR3B/RPC2, POLR1C/RPAC1, POLR1D/RPAC2, POLR3K/RPC10, POLR2E/RPABC1, POLR2F/RPABC2, POLR2H/RPABC3, POLR2K/RPABC4 and POLR2L/RPABC5; a mobile stalk composed of two subunits POLR3H/RPC8 and CRCP/RPC9, protruding from the core and functioning primarily in transcription initiation; and additional subunits homologous to general transcription factors of the RNA polymerase II machinery, POLR3C/RPC3-POLR3F/RPC6-POLR3G/RPC7 heterotrimer required for transcription initiation and POLR3D/RPC4-POLR3E/RPC5 heterodimer involved in both transcription initiation and termination. Directly interacts with POLR3G/RPC7 and POLR3GL. Directly interacts with POLR3F/RPC6. Interacts with GTF3C4. As part of the RNA polymerase III complex, interacts with PKP2.

The protein resides in the nucleus. In terms of biological role, DNA-dependent RNA polymerase catalyzes the transcription of DNA into RNA using the four ribonucleoside triphosphates as substrates. Specific peripheric component of RNA polymerase III (Pol III) which synthesizes small non-coding RNAs including 5S rRNA, snRNAs, tRNAs and miRNAs from at least 500 distinct genomic loci. Part of POLR3C/RPC3-POLR3F/RPC6-POLR3G/RPC7 heterotrimer, coordinates the dynamics of Pol III stalk and clamp modules during the transition from apo to elongation state. Pol III plays a key role in sensing and limiting infection by intracellular bacteria and DNA viruses. Acts as a nuclear and cytosolic DNA sensor involved in innate immune response. Can sense non-self dsDNA that serves as template for transcription into dsRNA. The non-self RNA polymerase III transcripts, such as Epstein-Barr virus-encoded RNAs (EBERs) induce type I interferon and NF-kappa-B through the RIG-I pathway. Preferentially binds single-stranded DNA (ssDNA) in a sequence-independent manner. The polypeptide is DNA-directed RNA polymerase III subunit RPC3 (Rattus norvegicus (Rat)).